The sequence spans 89 residues: Small ribosomal subunit protein uS15 (89 aa).

This sequence belongs to the universal ribosomal protein uS15 family. As to quaternary structure, part of the 30S ribosomal subunit. Forms a bridge to the 50S subunit in the 70S ribosome, contacting the 23S rRNA.

Functionally, one of the primary rRNA binding proteins, it binds directly to 16S rRNA where it helps nucleate assembly of the platform of the 30S subunit by binding and bridging several RNA helices of the 16S rRNA. Its function is as follows. Forms an intersubunit bridge (bridge B4) with the 23S rRNA of the 50S subunit in the ribosome. This Brevibacillus brevis (strain 47 / JCM 6285 / NBRC 100599) protein is Small ribosomal subunit protein uS15.